The chain runs to 1116 residues: Error-prone DNA polymerase 1 (1116 aa).

This sequence belongs to the DNA polymerase type-C family. DnaE2 subfamily.

Its subcellular location is the cytoplasm. It carries out the reaction DNA(n) + a 2'-deoxyribonucleoside 5'-triphosphate = DNA(n+1) + diphosphate. Functionally, DNA polymerase involved in damage-induced mutagenesis and translesion synthesis (TLS). It is not the major replicative DNA polymerase. This is Error-prone DNA polymerase 1 from Rhizobium meliloti (strain 1021) (Ensifer meliloti).